We begin with the raw amino-acid sequence, 306 residues long: Putative dihydroorotate dehydrogenase A (fumarate) (306 aa).

FMN contacts are provided by residues Ser24 and 48 to 49 (KS). Residues Lys48, 72–76 (NAVGL), and Asn129 contribute to the substrate site. Asn129 serves as a coordination point for FMN. Cys132 functions as the Nucleophile in the catalytic mechanism. Residues Lys167 and Ile192 each coordinate FMN. 193-194 (NS) provides a ligand contact to substrate. Residues Gly218 and 244-245 (GG) each bind FMN.

The protein belongs to the dihydroorotate dehydrogenase family. Type 1 subfamily. Homodimer. The cofactor is FMN.

The protein localises to the cytoplasm. It catalyses the reaction (S)-dihydroorotate + fumarate = orotate + succinate. Its pathway is pyrimidine metabolism; UMP biosynthesis via de novo pathway. Catalyzes the conversion of dihydroorotate to orotate with fumarate as the electron acceptor. In Aeropyrum pernix (strain ATCC 700893 / DSM 11879 / JCM 9820 / NBRC 100138 / K1), this protein is Putative dihydroorotate dehydrogenase A (fumarate) (pyrD).